The chain runs to 230 residues: ATP phosphoribosyltransferase (230 aa).

It belongs to the ATP phosphoribosyltransferase family. Short subfamily. Heteromultimer composed of HisG and HisZ subunits.

The protein resides in the cytoplasm. It catalyses the reaction 1-(5-phospho-beta-D-ribosyl)-ATP + diphosphate = 5-phospho-alpha-D-ribose 1-diphosphate + ATP. The protein operates within amino-acid biosynthesis; L-histidine biosynthesis; L-histidine from 5-phospho-alpha-D-ribose 1-diphosphate: step 1/9. Functionally, catalyzes the condensation of ATP and 5-phosphoribose 1-diphosphate to form N'-(5'-phosphoribosyl)-ATP (PR-ATP). Has a crucial role in the pathway because the rate of histidine biosynthesis seems to be controlled primarily by regulation of HisG enzymatic activity. The protein is ATP phosphoribosyltransferase (hisG) of Chelativorans sp. (strain BNC1).